The chain runs to 111 residues: COX assembly mitochondrial protein (111 aa).

One can recognise a CHCH domain in the interval 39 to 82 (YKKCANFVQAMADCAKANGMKVFPTCDKQRDEMKSCLLFYQTDE). 2 consecutive short sequence motifs (cx9C motif) follow at residues 42 to 52 (CANFVQAMADC) and 64 to 74 (CDKQRDEMKSC). 2 cysteine pairs are disulfide-bonded: Cys-42–Cys-74 and Cys-52–Cys-64.

This sequence belongs to the CMC family.

The protein resides in the mitochondrion inner membrane. In terms of biological role, required for mitochondrial cytochrome c oxidase (COX) assembly and respiration. Binds copper. May be involved in copper trafficking and distribution to mitochondrial COX and SOD1. In Saccharomyces cerevisiae (strain YJM789) (Baker's yeast), this protein is COX assembly mitochondrial protein (CMC1).